The primary structure comprises 424 residues: Protein-glutamate methylesterase/protein-glutamine glutaminase (424 aa).

Residues 6–123 (RVLVVDDSAF…SLDDFTRQLT (118 aa)) enclose the Response regulatory domain. D57 is subject to 4-aspartylphosphate. The segment at 177 to 210 (SRLSPGRSPGGKEGVAGAVSAGSTRGEAIRPGKG) is disordered. A CheB-type methylesterase domain is found at 229–423 (RRPGIEVVAI…PAIVALVTGA (195 aa)). Residues S241, H268, and D365 contribute to the active site.

It belongs to the CheB family. In terms of processing, phosphorylated by CheA. Phosphorylation of the N-terminal regulatory domain activates the methylesterase activity.

The protein localises to the cytoplasm. The enzyme catalyses [protein]-L-glutamate 5-O-methyl ester + H2O = L-glutamyl-[protein] + methanol + H(+). It catalyses the reaction L-glutaminyl-[protein] + H2O = L-glutamyl-[protein] + NH4(+). Its function is as follows. Involved in chemotaxis. Part of a chemotaxis signal transduction system that modulates chemotaxis in response to various stimuli. Catalyzes the demethylation of specific methylglutamate residues introduced into the chemoreceptors (methyl-accepting chemotaxis proteins or MCP) by CheR. Also mediates the irreversible deamidation of specific glutamine residues to glutamic acid. This is Protein-glutamate methylesterase/protein-glutamine glutaminase from Moorella thermoacetica (strain ATCC 39073 / JCM 9320).